The sequence spans 211 residues: WUSCHEL-related homeobox 14 (211 aa).

Positions 91-155 form a DNA-binding region, homeobox; WUS-type; sequence STRHRWTPTS…NRRARSKRKQ (65 aa). Residues 147–183 are disordered; the sequence is RRARSKRKQPQTTTANGQADDVAVTTEERRSCGDSGG.

It belongs to the WUS homeobox family. As to expression, expressed in root vasculature, pericycle and stamen. Expressed in the procambium during stem maturation.

Its subcellular location is the nucleus. In terms of biological role, acts redundantly with WOX4 downstream of the TDR/PXY receptor kinase to regulate procambial cell proliferation and differentiation in vascular tissue, independently of any role in vascular. Involved in the regulation of gibberellin (GA) biosynthesis pathway. Positively regulates the expression of the GA biosynthesis gene GA3OX1, and negatively regulates the expression of GA2OX1 during secondary growth, which increases bioactive GA content in the inflorescence stem. Promotes vascular cell differentiation in the inflorescence stem. Functionally, transcription factor which may be involved in developmental processes. This chain is WUSCHEL-related homeobox 14 (WOX14), found in Arabidopsis thaliana (Mouse-ear cress).